A 265-amino-acid polypeptide reads, in one-letter code: Tryptophan synthase alpha chain (265 aa).

Active-site proton acceptor residues include Glu49 and Asp60.

This sequence belongs to the TrpA family. In terms of assembly, tetramer of two alpha and two beta chains.

It carries out the reaction (1S,2R)-1-C-(indol-3-yl)glycerol 3-phosphate + L-serine = D-glyceraldehyde 3-phosphate + L-tryptophan + H2O. It participates in amino-acid biosynthesis; L-tryptophan biosynthesis; L-tryptophan from chorismate: step 5/5. Its function is as follows. The alpha subunit is responsible for the aldol cleavage of indoleglycerol phosphate to indole and glyceraldehyde 3-phosphate. The protein is Tryptophan synthase alpha chain of Cupriavidus metallidurans (strain ATCC 43123 / DSM 2839 / NBRC 102507 / CH34) (Ralstonia metallidurans).